Consider the following 692-residue polypeptide: Chaperone protein dnaK1 (692 aa).

Threonine 197 carries the phosphothreonine; by autocatalysis modification.

Belongs to the heat shock protein 70 family.

Functionally, acts as a chaperone. The sequence is that of Chaperone protein dnaK1 (dnaK1) from Synechocystis sp. (strain ATCC 27184 / PCC 6803 / Kazusa).